The primary structure comprises 74 residues: UPF0154 protein LSL_0542 (74 aa).

The chain crosses the membrane as a helical span at residues 5-25 (IWVLIVIIAAVLGFVGGFFAA).

This sequence belongs to the UPF0154 family.

Its subcellular location is the cell membrane. The protein is UPF0154 protein LSL_0542 of Ligilactobacillus salivarius (strain UCC118) (Lactobacillus salivarius).